The chain runs to 382 residues: Galactokinase (382 aa).

A substrate-binding site is contributed by 34-37 (EHTD). 124-130 (GAGLSSS) serves as a coordination point for ATP. 2 residues coordinate Mg(2+): serine 130 and glutamate 162. Residue aspartate 174 is the Proton acceptor of the active site. Tyrosine 223 lines the substrate pocket.

The protein belongs to the GHMP kinase family. GalK subfamily.

It is found in the cytoplasm. The enzyme catalyses alpha-D-galactose + ATP = alpha-D-galactose 1-phosphate + ADP + H(+). It functions in the pathway carbohydrate metabolism; galactose metabolism. In terms of biological role, catalyzes the transfer of the gamma-phosphate of ATP to D-galactose to form alpha-D-galactose-1-phosphate (Gal-1-P). This Salmonella paratyphi C (strain RKS4594) protein is Galactokinase.